Consider the following 84-residue polypeptide: MNSLLMITTCLILVGTVWANDGYLFDKRKRCTLECIDKTGDKNCDRNCKKEGGSFGKCSYSACWCKGLPGITPISRTPGKTCRK.

Positions 1-19 are cleaved as a signal peptide; it reads MNSLLMITTCLILVGTVWA. The LCN-type CS-alpha/beta domain maps to 20–83; sequence NDGYLFDKRK…ISRTPGKTCR (64 aa). Cystine bridges form between cysteine 31–cysteine 82, cysteine 35–cysteine 58, cysteine 44–cysteine 63, and cysteine 48–cysteine 65.

Belongs to the long (4 C-C) scorpion toxin superfamily. Sodium channel inhibitor family. Beta subfamily. Expressed by the venom gland.

The protein localises to the secreted. Its function is as follows. Beta toxins bind voltage-independently at site-4 of sodium channels (Nav) and shift the voltage of activation toward more negative potentials thereby affecting sodium channel activation and promoting spontaneous and repetitive firing. The sequence is that of Toxin Cex12 from Centruroides exilicauda (Bark scorpion).